Reading from the N-terminus, the 417-residue chain is L-rhamnose isomerase (417 aa).

Mn(2+) contacts are provided by His261, Asp293, and Asp295.

It belongs to the rhamnose isomerase family. It depends on Mn(2+) as a cofactor.

It is found in the cytoplasm. The enzyme catalyses L-rhamnopyranose = L-rhamnulose. The protein operates within carbohydrate degradation; L-rhamnose degradation; glycerone phosphate from L-rhamnose: step 1/3. Its function is as follows. Catalyzes the interconversion of L-rhamnose and L-rhamnulose. The protein is L-rhamnose isomerase of Oceanobacillus iheyensis (strain DSM 14371 / CIP 107618 / JCM 11309 / KCTC 3954 / HTE831).